The sequence spans 271 residues: ATP synthase subunit a (271 aa).

5 consecutive transmembrane segments (helical) span residues 38 to 58 (FWTLNIDSMFFSVVLGLLFLA), 100 to 120 (VIAPLALTVFVWVFLMNLMDL), 146 to 166 (DVNITLSMALGVFILIIFYSI), 211 to 231 (LFGNMYAGELIFILIAGLLPW), and 242 to 262 (AIFHILIITLQAFIFMVLTIV).

It belongs to the ATPase A chain family. As to quaternary structure, F-type ATPases have 2 components, CF(1) - the catalytic core - and CF(0) - the membrane proton channel. CF(1) has five subunits: alpha(3), beta(3), gamma(1), delta(1), epsilon(1). CF(0) has three main subunits: a(1), b(2) and c(9-12). The alpha and beta chains form an alternating ring which encloses part of the gamma chain. CF(1) is attached to CF(0) by a central stalk formed by the gamma and epsilon chains, while a peripheral stalk is formed by the delta and b chains.

The protein localises to the cell inner membrane. Key component of the proton channel; it plays a direct role in the translocation of protons across the membrane. This is ATP synthase subunit a from Klebsiella pneumoniae (strain 342).